The following is a 206-amino-acid chain: Thiamine-phosphate synthase (206 aa).

Residues 37–41 and Asn69 contribute to the 4-amino-2-methyl-5-(diphosphooxymethyl)pyrimidine site; that span reads QYRNK. Mg(2+)-binding residues include Asp70 and Asp89. Residue Ser108 participates in 4-amino-2-methyl-5-(diphosphooxymethyl)pyrimidine binding. Position 135–137 (135–137) interacts with 2-[(2R,5Z)-2-carboxy-4-methylthiazol-5(2H)-ylidene]ethyl phosphate; sequence SST. Lys138 lines the 4-amino-2-methyl-5-(diphosphooxymethyl)pyrimidine pocket. Residues Gly165 and 185 to 186 each bind 2-[(2R,5Z)-2-carboxy-4-methylthiazol-5(2H)-ylidene]ethyl phosphate; that span reads IS.

It belongs to the thiamine-phosphate synthase family. The cofactor is Mg(2+).

The enzyme catalyses 2-[(2R,5Z)-2-carboxy-4-methylthiazol-5(2H)-ylidene]ethyl phosphate + 4-amino-2-methyl-5-(diphosphooxymethyl)pyrimidine + 2 H(+) = thiamine phosphate + CO2 + diphosphate. It carries out the reaction 2-(2-carboxy-4-methylthiazol-5-yl)ethyl phosphate + 4-amino-2-methyl-5-(diphosphooxymethyl)pyrimidine + 2 H(+) = thiamine phosphate + CO2 + diphosphate. The catalysed reaction is 4-methyl-5-(2-phosphooxyethyl)-thiazole + 4-amino-2-methyl-5-(diphosphooxymethyl)pyrimidine + H(+) = thiamine phosphate + diphosphate. It functions in the pathway cofactor biosynthesis; thiamine diphosphate biosynthesis; thiamine phosphate from 4-amino-2-methyl-5-diphosphomethylpyrimidine and 4-methyl-5-(2-phosphoethyl)-thiazole: step 1/1. In terms of biological role, condenses 4-methyl-5-(beta-hydroxyethyl)thiazole monophosphate (THZ-P) and 2-methyl-4-amino-5-hydroxymethyl pyrimidine pyrophosphate (HMP-PP) to form thiamine monophosphate (TMP). The chain is Thiamine-phosphate synthase from Azoarcus sp. (strain BH72).